We begin with the raw amino-acid sequence, 150 residues long: Cell division protein SepF (150 aa).

A disordered region spans residues 26 to 45; sequence DREEIPEEHESKDRTAYQSK.

It belongs to the SepF family. In terms of assembly, homodimer. Interacts with FtsZ.

It is found in the cytoplasm. Its function is as follows. Cell division protein that is part of the divisome complex and is recruited early to the Z-ring. Probably stimulates Z-ring formation, perhaps through the cross-linking of FtsZ protofilaments. Its function overlaps with FtsA. The polypeptide is Cell division protein SepF (Bacillus licheniformis (strain ATCC 14580 / DSM 13 / JCM 2505 / CCUG 7422 / NBRC 12200 / NCIMB 9375 / NCTC 10341 / NRRL NRS-1264 / Gibson 46)).